The following is a 263-amino-acid chain: uncharacterized protein (263 aa).

Position 31-38 (31-38 (GPTGSGKT)) interacts with ATP.

The protein belongs to the CbbQ/NirQ/NorQ/GpvN family.

This is an uncharacterized protein from Staphylococcus epidermidis (strain ATCC 12228 / FDA PCI 1200).